The chain runs to 703 residues: Phenylalanine aminomutase (L-beta-phenylalanine forming) (703 aa).

Tyrosine 79 functions as the Proton donor/acceptor in the catalytic mechanism. The segment at residues 177–179 (ASG) is a cross-link (5-imidazolinone (Ala-Gly)). Position 178 is a 2,3-didehydroalanine (Ser) (serine 178).

The protein belongs to the PAL/histidase family. Contains an active site 4-methylidene-imidazol-5-one (MIO), which is formed autocatalytically by cyclization and dehydration of residues Ala-Ser-Gly.

It catalyses the reaction L-phenylalanine = L-beta-phenylalanine. Its pathway is mycotoxin biosynthesis. In terms of biological role, phenylalanine aminomutase; part of the gene cluster that mediates the biosynthesis of the mycotoxin cyclochlorotine, a hepatotoxic and carcinogenic cyclic chlorinated pentapeptide. Within the pathway, cctP1 provides the uncommon building block beta-Phe from Phe. The NRPS cctN initially catalyzes the condensation of L-serine (Ser), Pro, L-2-aminobutyrate (2Abu), Ser, and beta-Phe in this order to produce isocyclotine. After the dichlorination of Pro2 catalyzed by cctP2 to produce isocyclochlorotine, the cctO-mediated transacylation of isocyclochlorotine can furnish cyclochlorotine. The subsequent hydroxylation of cyclochlorotine by cctR yields hydroxycyclochlorotine as the final product. CctP1 probably acts as a phenylalanine aminomutase and provides the uncommon building block beta-Phe. Furthermore, 2Abu can be synthesized from threonine by one of the threonine dehydratases and transaminases localized outside of the cluster. The functions of the remaining proteins encoded by the cluster, cctM and cctT, have not been identified yet. This Talaromyces islandicus (Penicillium islandicum) protein is Phenylalanine aminomutase (L-beta-phenylalanine forming).